The primary structure comprises 368 residues: Cobalt-precorrin-5B C(1)-methyltransferase (368 aa).

This sequence belongs to the CbiD family.

It carries out the reaction Co-precorrin-5B + S-adenosyl-L-methionine = Co-precorrin-6A + S-adenosyl-L-homocysteine. It functions in the pathway cofactor biosynthesis; adenosylcobalamin biosynthesis; cob(II)yrinate a,c-diamide from sirohydrochlorin (anaerobic route): step 6/10. Its function is as follows. Catalyzes the methylation of C-1 in cobalt-precorrin-5B to form cobalt-precorrin-6A. The chain is Cobalt-precorrin-5B C(1)-methyltransferase from Brucella canis (strain ATCC 23365 / NCTC 10854 / RM-666).